The following is a 132-amino-acid chain: MGRDTIADIITYIRNADMDKKGTVRIPSTNITENIVKILLREGFIENVRKHRENNKDFLVLTLRHRRNRKRAYRNILKRISRPGLRIYSNSQRIPRISGGIGVVILSTSRGIMTDREARLERIGGEILFYIW.

Belongs to the universal ribosomal protein uS8 family. Part of the 30S ribosomal subunit.

Its subcellular location is the plastid. It is found in the chloroplast. Functionally, one of the primary rRNA binding proteins, it binds directly to 16S rRNA central domain where it helps coordinate assembly of the platform of the 30S subunit. The chain is Small ribosomal subunit protein uS8c (rps8) from Nymphaea alba (White water-lily).